Reading from the N-terminus, the 103-residue chain is Large ribosomal subunit protein eL14 (103 aa).

This sequence belongs to the eukaryotic ribosomal protein eL14 family.

This is Large ribosomal subunit protein eL14 from Pyrobaculum calidifontis (strain DSM 21063 / JCM 11548 / VA1).